The chain runs to 423 residues: Protein CLP1 homolog (423 aa).

Residues Glu16, Lys57, and 119 to 124 contribute to the ATP site; that span reads DVGKST.

Belongs to the Clp1 family. Clp1 subfamily.

It is found in the nucleus. Required for endonucleolytic cleavage during polyadenylation-dependent pre-mRNA 3'-end formation. The sequence is that of Protein CLP1 homolog (cbc) from Drosophila simulans (Fruit fly).